A 501-amino-acid polypeptide reads, in one-letter code: Flagellin (501 aa).

The protein belongs to the bacterial flagellin family.

It is found in the secreted. It localises to the bacterial flagellum. Its function is as follows. Flagellin is the subunit protein which polymerizes to form the filaments of bacterial flagella. This Salmonella choleraesuis (strain SC-B67) protein is Flagellin (fliC).